We begin with the raw amino-acid sequence, 750 residues long: Photosystem I P700 chlorophyll a apoprotein A1 (750 aa).

8 helical membrane passes run 70 to 93 (VFSAHFGQLSIIFLWLSGMYFHGA), 156 to 179 (LYCTAIGALVFAALMLFAGWFHYH), 195 to 219 (LNHHLTGLLGLGSLSWAGHQIHVSL), 291 to 309 (IIHHHLAIAILFLIAGHMY), 346 to 369 (WHAQLSINLAMLGSLTIVVAHHMY), 385 to 411 (LSLFTHHMWIGGFLIVGAAAHAAIFMV), 433 to 455 (AIISHLNWVCIFLGFHSFGLYIH), and 531 to 549 (FLVHHIHAFTIHVTVLILL). 2 residues coordinate [4Fe-4S] cluster: C573 and C582. The next 2 membrane-spanning stretches (helical) occupy residues 589–610 (HVFLGLFWMYNSISVVIFHFSW) and 664–686 (LSAYGLFFLGAHFVWAFSLMFLF). A chlorophyll a'-binding site is contributed by H675. Chlorophyll a-binding residues include M683 and Y691. W692 provides a ligand contact to phylloquinone. The chain crosses the membrane as a helical span at residues 724 to 744 (AVGVTHYLLGGIATTWAFFLA).

It belongs to the PsaA/PsaB family. The PsaA/B heterodimer binds the P700 chlorophyll special pair and subsequent electron acceptors. PSI consists of a core antenna complex that captures photons, and an electron transfer chain that converts photonic excitation into a charge separation. The eukaryotic PSI reaction center is composed of at least 11 subunits. P700 is a chlorophyll a/chlorophyll a' dimer, A0 is one or more chlorophyll a, A1 is one or both phylloquinones and FX is a shared 4Fe-4S iron-sulfur center. serves as cofactor.

The protein localises to the plastid. It localises to the chloroplast thylakoid membrane. The catalysed reaction is reduced [plastocyanin] + hnu + oxidized [2Fe-2S]-[ferredoxin] = oxidized [plastocyanin] + reduced [2Fe-2S]-[ferredoxin]. In terms of biological role, psaA and PsaB bind P700, the primary electron donor of photosystem I (PSI), as well as the electron acceptors A0, A1 and FX. PSI is a plastocyanin-ferredoxin oxidoreductase, converting photonic excitation into a charge separation, which transfers an electron from the donor P700 chlorophyll pair to the spectroscopically characterized acceptors A0, A1, FX, FA and FB in turn. Oxidized P700 is reduced on the lumenal side of the thylakoid membrane by plastocyanin. The chain is Photosystem I P700 chlorophyll a apoprotein A1 from Phaseolus vulgaris (Kidney bean).